Reading from the N-terminus, the 231-residue chain is Flagellar L-ring protein (231 aa).

Positions 1–18 are cleaved as a signal peptide; it reads MKHLLSVFALGGAVLLAG. Cysteine 19 carries N-palmitoyl cysteine lipidation. Cysteine 19 is lipidated: S-diacylglycerol cysteine.

Belongs to the FlgH family. The basal body constitutes a major portion of the flagellar organelle and consists of four rings (L,P,S, and M) mounted on a central rod.

It localises to the cell outer membrane. The protein resides in the bacterial flagellum basal body. Its function is as follows. Assembles around the rod to form the L-ring and probably protects the motor/basal body from shearing forces during rotation. This is Flagellar L-ring protein from Pseudomonas entomophila (strain L48).